A 362-amino-acid polypeptide reads, in one-letter code: Mannose-1-phosphate guanyltransferase (362 aa).

This sequence belongs to the transferase hexapeptide repeat family.

Its subcellular location is the cytoplasm. The catalysed reaction is alpha-D-mannose 1-phosphate + GTP + H(+) = GDP-alpha-D-mannose + diphosphate. It functions in the pathway nucleotide-sugar biosynthesis; GDP-alpha-D-mannose biosynthesis; GDP-alpha-D-mannose from alpha-D-mannose 1-phosphate (GTP route): step 1/1. Its function is as follows. Involved in cell wall synthesis where it is required for glycosylation. Involved in cell cycle progression through cell-size checkpoint. The protein is Mannose-1-phosphate guanyltransferase (MPG1) of Candida albicans (strain SC5314 / ATCC MYA-2876) (Yeast).